A 529-amino-acid polypeptide reads, in one-letter code: Bifunctional purine biosynthesis protein PurH (529 aa).

In terms of domain architecture, MGS-like spans Met-1 to Val-148.

It belongs to the PurH family.

It catalyses the reaction (6R)-10-formyltetrahydrofolate + 5-amino-1-(5-phospho-beta-D-ribosyl)imidazole-4-carboxamide = 5-formamido-1-(5-phospho-D-ribosyl)imidazole-4-carboxamide + (6S)-5,6,7,8-tetrahydrofolate. The enzyme catalyses IMP + H2O = 5-formamido-1-(5-phospho-D-ribosyl)imidazole-4-carboxamide. The protein operates within purine metabolism; IMP biosynthesis via de novo pathway; 5-formamido-1-(5-phospho-D-ribosyl)imidazole-4-carboxamide from 5-amino-1-(5-phospho-D-ribosyl)imidazole-4-carboxamide (10-formyl THF route): step 1/1. It participates in purine metabolism; IMP biosynthesis via de novo pathway; IMP from 5-formamido-1-(5-phospho-D-ribosyl)imidazole-4-carboxamide: step 1/1. The sequence is that of Bifunctional purine biosynthesis protein PurH from Salmonella enteritidis PT4 (strain P125109).